The sequence spans 227 residues: 2,3-bisphosphoglycerate-dependent phosphoglycerate mutase (227 aa).

Substrate is bound by residues 7 to 14, 20 to 21, Arg59, 86 to 89, Lys97, 113 to 114, and 182 to 183; these read RHGQSEWN, TG, ERHY, RR, and GN. The active-site Tele-phosphohistidine intermediate is the His8. The active-site Proton donor/acceptor is the Glu86.

This sequence belongs to the phosphoglycerate mutase family. BPG-dependent PGAM subfamily. As to quaternary structure, homodimer.

It carries out the reaction (2R)-2-phosphoglycerate = (2R)-3-phosphoglycerate. It functions in the pathway carbohydrate degradation; glycolysis; pyruvate from D-glyceraldehyde 3-phosphate: step 3/5. In terms of biological role, catalyzes the interconversion of 2-phosphoglycerate and 3-phosphoglycerate. The sequence is that of 2,3-bisphosphoglycerate-dependent phosphoglycerate mutase from Neisseria meningitidis serogroup A / serotype 4A (strain DSM 15465 / Z2491).